The primary structure comprises 612 residues: Indole-3-acetic acid-amido synthetase GH3.6 (612 aa).

This sequence belongs to the IAA-amido conjugating enzyme family. In terms of tissue distribution, expressed in cotyledons, stipules, true leaves, hypocotyls, and all parts of the roots. Not detected in flowers.

Functionally, catalyzes the synthesis of indole-3-acetic acid (IAA)-amino acid conjugates, providing a mechanism for the plant to cope with the presence of excess auxin. Strongly reactive with Glu, Gln, Trp, Asp, Ala, Leu, Phe, Gly, Tyr, Met, Ile and Val. Little or no product formation with His, Ser, Thr, Arg, Lys, or Cys. Also active on pyruvic and butyric acid analogs of IAA, PAA and the synthetic auxin naphthaleneacetic acid (NAA). The two chlorinated synthetic auxin herbicides 2,4-D and 3,6-dichloro-o-anisic acid (dicamba) cannot be used as substrates. Involved in auxin signal transduction. Inhibits shoot and hypocotyl cell elongation, and lateral root cell differentiation in light. The polypeptide is Indole-3-acetic acid-amido synthetase GH3.6 (GH3.6) (Arabidopsis thaliana (Mouse-ear cress)).